An 88-amino-acid chain; its full sequence is Small ribosomal subunit protein uS19 (88 aa).

Belongs to the universal ribosomal protein uS19 family.

Its function is as follows. Protein S19 forms a complex with S13 that binds strongly to the 16S ribosomal RNA. This Chlamydia abortus (strain DSM 27085 / S26/3) (Chlamydophila abortus) protein is Small ribosomal subunit protein uS19.